Consider the following 334-residue polypeptide: Leucine-rich repeat-containing protein 39 (334 aa).

Positions 10-47 form a coiled coil; it reads AVNAVKEVWEKRIKKLNEDLKREKEFQQKLVRIWEERV. LRR repeat units lie at residues 84 to 105, 107 to 128, 130 to 151, 153 to 176, 177 to 198, 200 to 221, 223 to 244, 246 to 267, and 269 to 290; these read QLQE…IGRF, NLIV…IGLL, RLQE…LSYC, SLEK…SNLL, KLTH…VLNM, ALEW…IERM, NLHT…ISSM, NLST…MEKM, and NLRF…PPSE.

Interacts with MYH7 (via C-terminus).

The protein resides in the cytoplasm. It is found in the myofibril. It localises to the sarcomere. The protein localises to the m line. Its function is as follows. Component of the sarcomeric M-band which plays a role in myocyte response to biomechanical stress. May regulate expression of other M-band proteins via an SRF-dependent pathway. Important for normal contractile function in heart. This is Leucine-rich repeat-containing protein 39 from Bos taurus (Bovine).